A 226-amino-acid polypeptide reads, in one-letter code: ATP-dependent Clp protease proteolytic subunit 2 (226 aa).

The Nucleophile role is filled by S118. Residue H143 is part of the active site.

Belongs to the peptidase S14 family. In terms of assembly, fourteen ClpP subunits assemble into 2 heptameric rings which stack back to back to give a disk-like structure with a central cavity, resembling the structure of eukaryotic proteasomes.

It localises to the cytoplasm. It carries out the reaction Hydrolysis of proteins to small peptides in the presence of ATP and magnesium. alpha-casein is the usual test substrate. In the absence of ATP, only oligopeptides shorter than five residues are hydrolyzed (such as succinyl-Leu-Tyr-|-NHMec, and Leu-Tyr-Leu-|-Tyr-Trp, in which cleavage of the -Tyr-|-Leu- and -Tyr-|-Trp bonds also occurs).. In terms of biological role, cleaves peptides in various proteins in a process that requires ATP hydrolysis. Has a chymotrypsin-like activity. Plays a major role in the degradation of misfolded proteins. In Synechocystis sp. (strain ATCC 27184 / PCC 6803 / Kazusa), this protein is ATP-dependent Clp protease proteolytic subunit 2.